A 66-amino-acid chain; its full sequence is Large ribosomal subunit protein eL24 (66 aa).

Zn(2+) contacts are provided by Cys7, Cys10, Cys33, and Cys37. A C4-type zinc finger spans residues 7-37; it reads CSYCGKPFEPGTGKMYVRNDGRVLFFCSRKC.

This sequence belongs to the eukaryotic ribosomal protein eL24 family. Part of the 50S ribosomal subunit. Forms a cluster with proteins L3 and L14. The cofactor is Zn(2+).

Its function is as follows. Binds to the 23S rRNA. The polypeptide is Large ribosomal subunit protein eL24 (Pyrococcus furiosus (strain ATCC 43587 / DSM 3638 / JCM 8422 / Vc1)).